A 487-amino-acid polypeptide reads, in one-letter code: Acetyl-coenzyme A carboxylase carboxyl transferase subunit beta, chloroplastic (487 aa).

The CoA carboxyltransferase N-terminal domain occupies 223 to 487 (LWVQCENCYG…LHAFFPLNQN (265 aa)). Residues Cys227, Cys230, Cys246, and Cys249 each coordinate Zn(2+). A C4-type zinc finger spans residues 227 to 249 (CENCYGLNYKKSFKSKMNLCEQC).

Belongs to the AccD/PCCB family. In terms of assembly, acetyl-CoA carboxylase is a heterohexamer composed of biotin carboxyl carrier protein, biotin carboxylase and 2 subunits each of ACCase subunit alpha and ACCase plastid-coded subunit beta (accD). Requires Zn(2+) as cofactor.

It is found in the plastid. It localises to the chloroplast stroma. The catalysed reaction is N(6)-carboxybiotinyl-L-lysyl-[protein] + acetyl-CoA = N(6)-biotinyl-L-lysyl-[protein] + malonyl-CoA. It functions in the pathway lipid metabolism; malonyl-CoA biosynthesis; malonyl-CoA from acetyl-CoA: step 1/1. Its function is as follows. Component of the acetyl coenzyme A carboxylase (ACC) complex. Biotin carboxylase (BC) catalyzes the carboxylation of biotin on its carrier protein (BCCP) and then the CO(2) group is transferred by the transcarboxylase to acetyl-CoA to form malonyl-CoA. In Panax ginseng (Korean ginseng), this protein is Acetyl-coenzyme A carboxylase carboxyl transferase subunit beta, chloroplastic.